A 123-amino-acid polypeptide reads, in one-letter code: Large ribosomal subunit protein bL12 (123 aa).

This sequence belongs to the bacterial ribosomal protein bL12 family. As to quaternary structure, homodimer. Part of the ribosomal stalk of the 50S ribosomal subunit. Forms a multimeric L10(L12)X complex, where L10 forms an elongated spine to which 2 to 4 L12 dimers bind in a sequential fashion. Binds GTP-bound translation factors.

In terms of biological role, forms part of the ribosomal stalk which helps the ribosome interact with GTP-bound translation factors. Is thus essential for accurate translation. This is Large ribosomal subunit protein bL12 from Rhodopseudomonas palustris (strain BisA53).